Here is a 257-residue protein sequence, read N- to C-terminus: MVLIRVLANLLILQLSYAQKSSELVVGGDECNINEHRFLVLVYTDGIQCGGTLINKEWMLTAAHCDGKKMKLQFGLHSKNVPNKDKQTRVPKKKYFFPCSKNFTKWDKDIMLIRLNHPVNNSTHIAPLSLPSKPPSQDTVCNIMGWGTISPTKEIYPDVPHCANINIVDHAVCRAFYPGLLEKSKTLCAGILEGGKDTCQGVSGGPLICNGQIQGIVSVGGDPCAEPRVPALYTKVFDHLDWIKSIIAGNTAATCPL.

Positions 1-18 are cleaved as a signal peptide; it reads MVLIRVLANLLILQLSYA. A propeptide spanning residues 19 to 24 is cleaved from the precursor; the sequence is QKSSEL. The Peptidase S1 domain maps to 25 to 248; the sequence is VVGGDECNIN…HLDWIKSIIA (224 aa). Disulfide bonds link C31–C162, C49–C65, C141–C209, C173–C188, and C199–C224. Catalysis depends on H64, which acts as the Charge relay system. N102 carries N-linked (GlcNAc...) asparagine glycosylation. Residue D109 is the Charge relay system of the active site. 2 N-linked (GlcNAc...) asparagine glycosylation sites follow: N120 and N121. Residue S203 is the Charge relay system of the active site.

It belongs to the peptidase S1 family. Snake venom subfamily. As to quaternary structure, monomer. Expressed by the venom gland.

The protein resides in the secreted. Functionally, snake venom serine protease that may act in the hemostasis system of the prey. The sequence is that of Snake venom serine protease KN10 from Trimeresurus stejnegeri (Chinese green tree viper).